The primary structure comprises 494 residues: Cytochrome P450 2A5 (494 aa).

Residue Ser131 is modified to Phosphoserine. An N6-acetyllysine modification is found at Lys379. Heme is bound at residue Cys439.

This sequence belongs to the cytochrome P450 family. Heme serves as cofactor. As to expression, liver, with a strong circadian rhythmicity. Circadian expression is regulated by DBP.

It is found in the endoplasmic reticulum membrane. The protein resides in the microsome membrane. It catalyses the reaction an organic molecule + reduced [NADPH--hemoprotein reductase] + O2 = an alcohol + oxidized [NADPH--hemoprotein reductase] + H2O + H(+). Its function is as follows. Exhibits a high coumarin 7-hydroxylase activity. In Mus musculus (Mouse), this protein is Cytochrome P450 2A5 (Cyp2a5).